Reading from the N-terminus, the 387-residue chain is O-phospho-L-seryl-tRNA:Cys-tRNA synthase 2 (387 aa).

Pyridoxal 5'-phosphate is bound by residues A89–R90, N196, and S219–H221. Residue K222 is modified to N6-(pyridoxal phosphate)lysine.

This sequence belongs to the SepCysS family. Homodimer. Interacts with SepRS. Pyridoxal 5'-phosphate is required as a cofactor.

The enzyme catalyses O-phospho-L-seryl-tRNA(Cys) + hydrogen sulfide + H(+) = L-cysteinyl-tRNA(Cys) + phosphate. In terms of biological role, converts O-phospho-L-seryl-tRNA(Cys) (Sep-tRNA(Cys)) to L-cysteinyl-tRNA(Cys) (Cys-tRNA(Cys)). This chain is O-phospho-L-seryl-tRNA:Cys-tRNA synthase 2, found in Methanococcoides burtonii (strain DSM 6242 / NBRC 107633 / OCM 468 / ACE-M).